Reading from the N-terminus, the 279-residue chain is Oxygen-dependent coproporphyrinogen-III oxidase (279 aa).

Ser-102 serves as a coordination point for substrate. A divalent metal cation is bound by residues His-106 and His-116. The active-site Proton donor is His-116. 118–120 (NTR) is a binding site for substrate. His-149 and His-179 together coordinate a divalent metal cation. Residues 244–279 (YVEFNLLYDRGTKFGLMTDGNVEAILMSLPPEVKFN) are important for dimerization.

The protein belongs to the aerobic coproporphyrinogen-III oxidase family. Homodimer. It depends on a divalent metal cation as a cofactor.

It localises to the cytoplasm. It catalyses the reaction coproporphyrinogen III + O2 + 2 H(+) = protoporphyrinogen IX + 2 CO2 + 2 H2O. It participates in porphyrin-containing compound metabolism; protoporphyrin-IX biosynthesis; protoporphyrinogen-IX from coproporphyrinogen-III (O2 route): step 1/1. Involved in the heme biosynthesis. Catalyzes the aerobic oxidative decarboxylation of propionate groups of rings A and B of coproporphyrinogen-III to yield the vinyl groups in protoporphyrinogen-IX. The polypeptide is Oxygen-dependent coproporphyrinogen-III oxidase (Rickettsia akari (strain Hartford)).